The following is a 196-amino-acid chain: 7-methyl-GTP pyrophosphatase (196 aa).

Asp-69 functions as the Proton acceptor in the catalytic mechanism.

The protein belongs to the Maf family. YceF subfamily. It depends on a divalent metal cation as a cofactor.

It localises to the cytoplasm. The catalysed reaction is N(7)-methyl-GTP + H2O = N(7)-methyl-GMP + diphosphate + H(+). Functionally, nucleoside triphosphate pyrophosphatase that hydrolyzes 7-methyl-GTP (m(7)GTP). May have a dual role in cell division arrest and in preventing the incorporation of modified nucleotides into cellular nucleic acids. The polypeptide is 7-methyl-GTP pyrophosphatase (Photorhabdus laumondii subsp. laumondii (strain DSM 15139 / CIP 105565 / TT01) (Photorhabdus luminescens subsp. laumondii)).